The sequence spans 366 residues: Tetraacyldisaccharide 4'-kinase (366 aa).

Residue 51–58 (TVGGTGKT) participates in ATP binding.

Belongs to the LpxK family.

It catalyses the reaction a lipid A disaccharide + ATP = a lipid IVA + ADP + H(+). It functions in the pathway glycolipid biosynthesis; lipid IV(A) biosynthesis; lipid IV(A) from (3R)-3-hydroxytetradecanoyl-[acyl-carrier-protein] and UDP-N-acetyl-alpha-D-glucosamine: step 6/6. Transfers the gamma-phosphate of ATP to the 4'-position of a tetraacyldisaccharide 1-phosphate intermediate (termed DS-1-P) to form tetraacyldisaccharide 1,4'-bis-phosphate (lipid IVA). This chain is Tetraacyldisaccharide 4'-kinase, found in Phocaeicola vulgatus (strain ATCC 8482 / DSM 1447 / JCM 5826 / CCUG 4940 / NBRC 14291 / NCTC 11154) (Bacteroides vulgatus).